The primary structure comprises 154 residues: UPF0225 protein YPDSF_0962 (154 aa).

Belongs to the UPF0225 family.

The protein is UPF0225 protein YPDSF_0962 of Yersinia pestis (strain Pestoides F).